A 348-amino-acid polypeptide reads, in one-letter code: tRNA N6-adenosine threonylcarbamoyltransferase (348 aa).

H111 and H115 together coordinate Fe cation. Substrate-binding positions include 134-138, D167, G180, D184, and N280; that span reads LVSGG. Residue D308 participates in Fe cation binding.

It belongs to the KAE1 / TsaD family. Requires Fe(2+) as cofactor.

It localises to the cytoplasm. It catalyses the reaction L-threonylcarbamoyladenylate + adenosine(37) in tRNA = N(6)-L-threonylcarbamoyladenosine(37) in tRNA + AMP + H(+). Its function is as follows. Required for the formation of a threonylcarbamoyl group on adenosine at position 37 (t(6)A37) in tRNAs that read codons beginning with adenine. Is involved in the transfer of the threonylcarbamoyl moiety of threonylcarbamoyl-AMP (TC-AMP) to the N6 group of A37, together with TsaE and TsaB. TsaD likely plays a direct catalytic role in this reaction. The sequence is that of tRNA N6-adenosine threonylcarbamoyltransferase from Rippkaea orientalis (strain PCC 8801 / RF-1) (Cyanothece sp. (strain PCC 8801)).